The following is a 298-amino-acid chain: NAD-dependent L-serine dehydrogenase (298 aa).

Residues 2-31 (KQIA…NVFD), 65-66 (LP), P66, and T96 each bind NAD(+). K171 is a catalytic residue. An NAD(+)-binding site is contributed by K246.

The protein belongs to the HIBADH-related family. As to quaternary structure, homotetramer, dimer of dimers.

The enzyme catalyses L-serine + NAD(+) = aminoacetaldehyde + CO2 + NADH. Its pathway is amino-acid degradation. NAD-dependent L-serine dehydrogenase that catalyzes the oxidation of L-serine and methyl-L-serine and is possibly involved in serine catabolism. Has low activity toward beta-hydroxyisobutyrate. The sequence is that of NAD-dependent L-serine dehydrogenase from Pseudomonas aeruginosa (strain ATCC 15692 / DSM 22644 / CIP 104116 / JCM 14847 / LMG 12228 / 1C / PRS 101 / PAO1).